A 505-amino-acid polypeptide reads, in one-letter code: Ribose import ATP-binding protein RbsA (505 aa).

2 consecutive ABC transporter domains span residues 12 to 249 and 259 to 504; these read LQMK…VGRK and VKKG…VAFS. ATP is bound at residue 44–51; sequence GENGAGKS.

The protein belongs to the ABC transporter superfamily. Ribose importer (TC 3.A.1.2.1) family. The complex is composed of an ATP-binding protein (RbsA), two transmembrane proteins (RbsC) and a solute-binding protein (RbsB).

Its subcellular location is the cell membrane. The catalysed reaction is D-ribose(out) + ATP + H2O = D-ribose(in) + ADP + phosphate + H(+). Its function is as follows. Part of the ABC transporter complex RbsABC involved in ribose import. Responsible for energy coupling to the transport system. This is Ribose import ATP-binding protein RbsA from Clostridium tetani (strain Massachusetts / E88).